The chain runs to 165 residues: Protein-export protein SecB (165 aa).

The protein belongs to the SecB family. Homotetramer, a dimer of dimers. One homotetramer interacts with 1 SecA dimer.

It is found in the cytoplasm. Functionally, one of the proteins required for the normal export of preproteins out of the cell cytoplasm. It is a molecular chaperone that binds to a subset of precursor proteins, maintaining them in a translocation-competent state. It also specifically binds to its receptor SecA. This Colwellia psychrerythraea (strain 34H / ATCC BAA-681) (Vibrio psychroerythus) protein is Protein-export protein SecB.